We begin with the raw amino-acid sequence, 99 residues long: MTQLPAVEKQEEHLRLRIFLQPKASKDQIVGLHDNELKITITAPPIDGQANAHLLKFLSKTFKVPKSSIVLEKGELNRHKQILIPNPKVIPTEVNVLLK.

The protein belongs to the UPF0235 family.

The chain is UPF0235 protein PM1313 from Pasteurella multocida (strain Pm70).